The sequence spans 547 residues: Phenylalanine--tRNA ligase beta subunit (547 aa).

The 76-residue stretch at 269 to 344 (LDVRFMEVDV…IGYGYENITP (76 aa)) folds into the B5 domain. The Mg(2+) site is built by Asp-322, Asp-328, Glu-331, and Asp-332.

Belongs to the phenylalanyl-tRNA synthetase beta subunit family. Type 2 subfamily. As to quaternary structure, tetramer of two alpha and two beta subunits. The cofactor is Mg(2+).

The protein localises to the cytoplasm. It catalyses the reaction tRNA(Phe) + L-phenylalanine + ATP = L-phenylalanyl-tRNA(Phe) + AMP + diphosphate + H(+). The sequence is that of Phenylalanine--tRNA ligase beta subunit from Archaeoglobus fulgidus (strain ATCC 49558 / DSM 4304 / JCM 9628 / NBRC 100126 / VC-16).